A 279-amino-acid chain; its full sequence is Phosphate import ATP-binding protein PstB (279 aa).

Positions 33-274 (LDINKLNLFY…PLKKKTEDYI (242 aa)) constitute an ABC transporter domain. 65–72 (GPSGCGKS) lines the ATP pocket.

Belongs to the ABC transporter superfamily. Phosphate importer (TC 3.A.1.7) family. As to quaternary structure, the complex is composed of two ATP-binding proteins (PstB), two transmembrane proteins (PstC and PstA) and a solute-binding protein (PstS).

Its subcellular location is the cell inner membrane. It catalyses the reaction phosphate(out) + ATP + H2O = ADP + 2 phosphate(in) + H(+). Functionally, part of the ABC transporter complex PstSACB involved in phosphate import. Responsible for energy coupling to the transport system. The sequence is that of Phosphate import ATP-binding protein PstB from Colwellia psychrerythraea (strain 34H / ATCC BAA-681) (Vibrio psychroerythus).